Here is a 217-residue protein sequence, read N- to C-terminus: Ribosomal RNA small subunit methyltransferase G (217 aa).

S-adenosyl-L-methionine-binding positions include Gly79, Leu84, 130 to 131 (IE), and Arg148.

The protein belongs to the methyltransferase superfamily. RNA methyltransferase RsmG family.

The protein resides in the cytoplasm. It carries out the reaction guanosine(527) in 16S rRNA + S-adenosyl-L-methionine = N(7)-methylguanosine(527) in 16S rRNA + S-adenosyl-L-homocysteine. In terms of biological role, specifically methylates the N7 position of guanine in position 527 of 16S rRNA. In Desulfotalea psychrophila (strain LSv54 / DSM 12343), this protein is Ribosomal RNA small subunit methyltransferase G.